Consider the following 132-residue polypeptide: Small ribosomal subunit protein uS8 (132 aa).

Belongs to the universal ribosomal protein uS8 family. As to quaternary structure, part of the 30S ribosomal subunit. Contacts proteins S5 and S12.

Its function is as follows. One of the primary rRNA binding proteins, it binds directly to 16S rRNA central domain where it helps coordinate assembly of the platform of the 30S subunit. The polypeptide is Small ribosomal subunit protein uS8 (Xylella fastidiosa (strain M23)).